The chain runs to 190 residues: Dynein axonemal light chain 1 (190 aa).

Alanine 2 carries the post-translational modification N-acetylalanine. LRR repeat units lie at residues 47-69, 70-93, 95-114, and 115-138; these read LANCEKLSLSTNCIEKIANLNGL, KNLRILSLGRNNIKNLNGLEAVGD, LEELWISYNFIEKLKGIHVM, and RKLKILYISNNLVKDWAEFVKLAE. The residue at position 56 (serine 56) is a Phosphoserine.

It belongs to the dynein light chain LC1-type family. As to quaternary structure, interacts with ZMYND10 (via C-terminus). Interacts with DNAH5, a outer arm dynein heavy chain. Interacts with tubulin located within the A-tubule of the outer doublets in a ATP-independent manner.

It localises to the cytoplasm. It is found in the cytoskeleton. The protein resides in the cilium axoneme. Part of the multisubunit axonemal ATPase complexes that generate the force for cilia motility and govern beat frequency. Component of the outer arm dynein (ODA). May be involved in a mechanosensory feedback mechanism controlling ODA activity based on external conformational cues by tethering the outer arm dynein heavy chain (DNAH5) to the microtubule within the axoneme. Important for ciliary function in the airways and for the function of the cilia that produce the nodal flow essential for the determination of the left-right asymmetry. The protein is Dynein axonemal light chain 1 of Rattus norvegicus (Rat).